A 335-amino-acid chain; its full sequence is MVPTVDMGIPGASVSSRSVADRPNRKRVLLAEPRGYCAGVDRAVETVERALQKHGPPVYVRHEIVHNRHVVDTLAKAGAVFVEETEQVPEGAIVVFSAHGVAPTVHVSASERNLQVIDATCPLVTKVHNEARRFARDDYDILLIGHEGHEEVVGTAGEAPDHVQLVDGVDAVDQVTVRDEDKVVWLSQTTLSVDETMEIVGRLRRRFPKLQDPPSDDICYATQNRQVAVKAMAPECELVIVVGSRNSSNSVRLVEVALGAGARAAHLVDWADDIDSAWLDGVTTVGVTSGASVPEVLVRGVLERLAECGYDIVQPVTTANETLVFALPRELRSPR.

C37 contacts [4Fe-4S] cluster. Residues H66 and H99 each coordinate (2E)-4-hydroxy-3-methylbut-2-enyl diphosphate. Positions 66 and 99 each coordinate dimethylallyl diphosphate. Residues H66 and H99 each coordinate isopentenyl diphosphate. C121 contributes to the [4Fe-4S] cluster binding site. H149 is a (2E)-4-hydroxy-3-methylbut-2-enyl diphosphate binding site. H149 contributes to the dimethylallyl diphosphate binding site. Position 149 (H149) interacts with isopentenyl diphosphate. E151 acts as the Proton donor in catalysis. T189 serves as a coordination point for (2E)-4-hydroxy-3-methylbut-2-enyl diphosphate. C219 contacts [4Fe-4S] cluster. 4 residues coordinate (2E)-4-hydroxy-3-methylbut-2-enyl diphosphate: S247, S248, N249, and S292. Residues S247, S248, N249, and S292 each contribute to the dimethylallyl diphosphate site. Isopentenyl diphosphate contacts are provided by S247, S248, N249, and S292.

This sequence belongs to the IspH family. The cofactor is [4Fe-4S] cluster.

The catalysed reaction is isopentenyl diphosphate + 2 oxidized [2Fe-2S]-[ferredoxin] + H2O = (2E)-4-hydroxy-3-methylbut-2-enyl diphosphate + 2 reduced [2Fe-2S]-[ferredoxin] + 2 H(+). It carries out the reaction dimethylallyl diphosphate + 2 oxidized [2Fe-2S]-[ferredoxin] + H2O = (2E)-4-hydroxy-3-methylbut-2-enyl diphosphate + 2 reduced [2Fe-2S]-[ferredoxin] + 2 H(+). The protein operates within isoprenoid biosynthesis; dimethylallyl diphosphate biosynthesis; dimethylallyl diphosphate from (2E)-4-hydroxy-3-methylbutenyl diphosphate: step 1/1. Its pathway is isoprenoid biosynthesis; isopentenyl diphosphate biosynthesis via DXP pathway; isopentenyl diphosphate from 1-deoxy-D-xylulose 5-phosphate: step 6/6. Its function is as follows. Catalyzes the conversion of 1-hydroxy-2-methyl-2-(E)-butenyl 4-diphosphate (HMBPP) into a mixture of isopentenyl diphosphate (IPP) and dimethylallyl diphosphate (DMAPP). Acts in the terminal step of the DOXP/MEP pathway for isoprenoid precursor biosynthesis. Has a higher activity compared with LytB2. Is essential for M.tuberculosis growth in vitro. The polypeptide is 4-hydroxy-3-methylbut-2-enyl diphosphate reductase 2 (Mycobacterium tuberculosis (strain ATCC 25618 / H37Rv)).